Here is a 311-residue protein sequence, read N- to C-terminus: Probable manganese-dependent inorganic pyrophosphatase (311 aa).

Positions 9, 13, 15, 75, 97, and 149 each coordinate Mn(2+).

This sequence belongs to the PPase class C family. Mn(2+) serves as cofactor.

The protein localises to the cytoplasm. It catalyses the reaction diphosphate + H2O = 2 phosphate + H(+). The polypeptide is Probable manganese-dependent inorganic pyrophosphatase (Lactobacillus johnsonii (strain CNCM I-12250 / La1 / NCC 533)).